Reading from the N-terminus, the 30-residue chain is 136 kDa hydroxyproline-rich cell wall glycoprotein, major component (30 aa).

4-hydroxyproline is present on residues Pro-8, Pro-9, Pro-10, Pro-11, Pro-12, Pro-17, Pro-18, Pro-19, Pro-20, Pro-26, Pro-27, Pro-28, and Pro-29.

Post-translationally, O-glycosylated.

The protein localises to the secreted. It is found in the cell wall. The chain is 136 kDa hydroxyproline-rich cell wall glycoprotein, major component from Phaseolus vulgaris (Kidney bean).